We begin with the raw amino-acid sequence, 256 residues long: Homeobox protein Hox-D13a (256 aa).

Positions glycine 191–proline 250 form a DNA-binding region, homeobox.

The protein belongs to the Abd-B homeobox family.

It localises to the nucleus. Sequence-specific transcription factor which is part of a developmental regulatory system that provides cells with specific positional identities on the anterior-posterior axis. This chain is Homeobox protein Hox-D13a (hoxd13a), found in Danio rerio (Zebrafish).